A 423-amino-acid chain; its full sequence is UDP-N-acetylglucosamine 1-carboxyvinyltransferase 1 (423 aa).

23–24 (KN) contributes to the phosphoenolpyruvate binding site. Arginine 96 contacts UDP-N-acetyl-alpha-D-glucosamine. Cysteine 120 (proton donor) is an active-site residue. A 2-(S-cysteinyl)pyruvic acid O-phosphothioketal modification is found at cysteine 120. UDP-N-acetyl-alpha-D-glucosamine is bound by residues aspartate 309 and valine 331.

It belongs to the EPSP synthase family. MurA subfamily.

The protein resides in the cytoplasm. It carries out the reaction phosphoenolpyruvate + UDP-N-acetyl-alpha-D-glucosamine = UDP-N-acetyl-3-O-(1-carboxyvinyl)-alpha-D-glucosamine + phosphate. It participates in cell wall biogenesis; peptidoglycan biosynthesis. Its function is as follows. Cell wall formation. Adds enolpyruvyl to UDP-N-acetylglucosamine. The protein is UDP-N-acetylglucosamine 1-carboxyvinyltransferase 1 of Streptococcus pyogenes serotype M1.